A 213-amino-acid chain; its full sequence is Pyridoxine/pyridoxamine 5'-phosphate oxidase (213 aa).

Substrate is bound by residues 9–12 (RKSY) and lysine 67. FMN-binding positions include 62-67 (RVVLIK), 77-78 (YT), arginine 83, and lysine 84. Tyrosine 124, arginine 128, and serine 132 together coordinate substrate. FMN-binding positions include 141–142 (QS) and tryptophan 185. 191 to 193 (RLH) contacts substrate. Arginine 195 contributes to the FMN binding site.

It belongs to the pyridoxamine 5'-phosphate oxidase family. In terms of assembly, homodimer. FMN is required as a cofactor.

The catalysed reaction is pyridoxamine 5'-phosphate + O2 + H2O = pyridoxal 5'-phosphate + H2O2 + NH4(+). It carries out the reaction pyridoxine 5'-phosphate + O2 = pyridoxal 5'-phosphate + H2O2. Its pathway is cofactor metabolism; pyridoxal 5'-phosphate salvage; pyridoxal 5'-phosphate from pyridoxamine 5'-phosphate: step 1/1. It participates in cofactor metabolism; pyridoxal 5'-phosphate salvage; pyridoxal 5'-phosphate from pyridoxine 5'-phosphate: step 1/1. In terms of biological role, catalyzes the oxidation of either pyridoxine 5'-phosphate (PNP) or pyridoxamine 5'-phosphate (PMP) into pyridoxal 5'-phosphate (PLP). The chain is Pyridoxine/pyridoxamine 5'-phosphate oxidase from Methylibium petroleiphilum (strain ATCC BAA-1232 / LMG 22953 / PM1).